Reading from the N-terminus, the 1845-residue chain is Proteasome activator complex subunit 4 (1845 aa).

The segment covering 1–13 (MEPAERAGGRDPL) has biased composition (basic and acidic residues). Residues 1–26 (MEPAERAGGRDPLEPGGRPGPDPQGF) form a disordered region. HEAT repeat units lie at residues 475-519 (PEGP…LVDC) and 1000-1039 (NFCC…NHSG). A Phosphoserine modification is found at serine 1123. HEAT repeat units follow at residues 1181–1219 (RVLP…QLKR) and 1356–1394 (DAFL…GSKH). Serine 1616 is modified (phosphoserine). HEAT repeat units follow at residues 1638 to 1676 (PHQV…YNLF) and 1682 to 1720 (EDAV…CNFL). A bromodomain-like (BRDL) region spans residues 1652–1740 (ARSSSWHARY…EQLCKTKLPK (89 aa)).

The protein belongs to the BLM10 family. In terms of assembly, homodimer. Component of the spermatoproteasome, a form of the proteasome specifically found in testis. Interacts with the 20S and 26S proteasomes. Post-translationally, phosphorylated.

It is found in the cytoplasm. The protein resides in the cytosol. The protein localises to the nucleus. Its subcellular location is the nucleus speckle. Associated component of the proteasome that specifically recognizes acetylated histones and promotes ATP- and ubiquitin-independent degradation of core histones during spermatogenesis and DNA damage response. Recognizes and binds acetylated histones via its bromodomain-like (BRDL) region and activates the proteasome by opening the gated channel for substrate entry. Binds to the core proteasome via its C-terminus, which occupies the same binding sites as the proteasomal ATPases, opening the closed structure of the proteasome via an active gating mechanism. Component of the spermatoproteasome, a form of the proteasome specifically found in testis: binds to acetylated histones and promotes degradation of histones, thereby participating actively to the exchange of histones during spermatogenesis. Also involved in DNA damage response in somatic cells, by promoting degradation of histones following DNA double-strand breaks. The protein is Proteasome activator complex subunit 4 (PSME4) of Bos taurus (Bovine).